The following is an 885-amino-acid chain: DNA mismatch repair protein MutS (885 aa).

626–633 (GPNMGGKS) serves as a coordination point for ATP.

Belongs to the DNA mismatch repair MutS family.

Functionally, this protein is involved in the repair of mismatches in DNA. It is possible that it carries out the mismatch recognition step. This protein has a weak ATPase activity. The sequence is that of DNA mismatch repair protein MutS from Burkholderia cenocepacia (strain HI2424).